We begin with the raw amino-acid sequence, 435 residues long: 3-phosphoshikimate 1-carboxyvinyltransferase (435 aa).

3-phosphoshikimate is bound by residues Lys-22, Ser-23, and Arg-27. Phosphoenolpyruvate is bound at residue Lys-22. The phosphoenolpyruvate site is built by Gly-95 and Arg-123. 4 residues coordinate 3-phosphoshikimate: Ser-168, Gln-170, Asp-319, and Lys-346. Position 170 (Gln-170) interacts with phosphoenolpyruvate. Asp-319 acts as the Proton acceptor in catalysis. Arg-350 and Arg-393 together coordinate phosphoenolpyruvate.

It belongs to the EPSP synthase family. Monomer.

It localises to the cytoplasm. The enzyme catalyses 3-phosphoshikimate + phosphoenolpyruvate = 5-O-(1-carboxyvinyl)-3-phosphoshikimate + phosphate. It functions in the pathway metabolic intermediate biosynthesis; chorismate biosynthesis; chorismate from D-erythrose 4-phosphate and phosphoenolpyruvate: step 6/7. Functionally, catalyzes the transfer of the enolpyruvyl moiety of phosphoenolpyruvate (PEP) to the 5-hydroxyl of shikimate-3-phosphate (S3P) to produce enolpyruvyl shikimate-3-phosphate and inorganic phosphate. In Chloroflexus aggregans (strain MD-66 / DSM 9485), this protein is 3-phosphoshikimate 1-carboxyvinyltransferase.